The primary structure comprises 580 residues: DNA mismatch repair protein MutL (580 aa).

It belongs to the DNA mismatch repair MutL/HexB family.

This protein is involved in the repair of mismatches in DNA. It is required for dam-dependent methyl-directed DNA mismatch repair. May act as a 'molecular matchmaker', a protein that promotes the formation of a stable complex between two or more DNA-binding proteins in an ATP-dependent manner without itself being part of a final effector complex. This is DNA mismatch repair protein MutL from Chlamydia felis (strain Fe/C-56) (Chlamydophila felis).